Reading from the N-terminus, the 354-residue chain is MSGNTIGKIFCVTTFGESHGEALGCIIDGTPPGLELSCKDLQYDLNRRRPGTSRYTTLRREPDEVNILSGIFNGVTTGTSIGLIIYNHDHRSQDYSDIKNLFRPGHADYTYEKKYGIRDYRGGGRSSARETAMRVAAGAIAKKYLNEKYGITIRAYLSAMGNIKCPFKSWQEVENNPFFCSDPEKILALENLIKYLKKIGDSIGAEITIIAENIPVGLGEPVFDRLDADLSHALMSINAAKGVEIGDGFSVINQRGSEHRDEITPQGFLTNHSGGILGGISNGREIVLKVAFKPTSSIRKAGNTINKNNEKVQIVTKGRHDPCVGLRAVPITEAMVAIVLMDHLLRFRAQCSGK.

2 residues coordinate NADP(+): Arg-48 and Arg-54. FMN contacts are provided by residues 125–127 (RSS), 238–239 (NA), Gly-278, 293–297 (KPTSS), and Arg-319.

Belongs to the chorismate synthase family. Homotetramer. FMNH2 is required as a cofactor.

The catalysed reaction is 5-O-(1-carboxyvinyl)-3-phosphoshikimate = chorismate + phosphate. It functions in the pathway metabolic intermediate biosynthesis; chorismate biosynthesis; chorismate from D-erythrose 4-phosphate and phosphoenolpyruvate: step 7/7. Its function is as follows. Catalyzes the anti-1,4-elimination of the C-3 phosphate and the C-6 proR hydrogen from 5-enolpyruvylshikimate-3-phosphate (EPSP) to yield chorismate, which is the branch point compound that serves as the starting substrate for the three terminal pathways of aromatic amino acid biosynthesis. This reaction introduces a second double bond into the aromatic ring system. This Buchnera aphidicola subsp. Acyrthosiphon pisum (strain 5A) protein is Chorismate synthase.